The primary structure comprises 123 residues: Large ribosomal subunit protein bL12 (123 aa).

Belongs to the bacterial ribosomal protein bL12 family. Homodimer. Part of the ribosomal stalk of the 50S ribosomal subunit. Forms a multimeric L10(L12)X complex, where L10 forms an elongated spine to which 2 to 4 L12 dimers bind in a sequential fashion. Binds GTP-bound translation factors.

Forms part of the ribosomal stalk which helps the ribosome interact with GTP-bound translation factors. Is thus essential for accurate translation. The chain is Large ribosomal subunit protein bL12 from Geobacillus kaustophilus (strain HTA426).